The chain runs to 293 residues: Prohibitin-2 (293 aa).

The helical; Signal-anchor for type II membrane protein transmembrane segment at 21–41 (FGGGFGLLALGGVGLLALSSL) threads the bilayer. Residues 190–235 (GREYAAAIEAKQVAQQEAERARFLVEKALQDKRSIIVKAEGEAQSA) adopt a coiled-coil conformation.

It belongs to the prohibitin family. As to quaternary structure, the mitochondrial prohibitin complex consists of two subunits (PHB1 and PHB2), assembled into a membrane-associated ring-shaped supercomplex of approximately 1 mDa.

It localises to the mitochondrion inner membrane. The protein resides in the cytoplasm. It is found in the nucleus. Its subcellular location is the cell membrane. Functionally, protein with pleiotropic attributes mediated in a cell-compartment- and tissue-specific manner, which include the plasma membrane-associated cell signaling functions, mitochondrial chaperone, and transcriptional co-regulator of transcription factors and sex steroid hormones in the nucleus. In the mitochondria, together with PHB, forms large ring complexes (prohibitin complexes) in the inner mitochondrial membrane (IMM) and functions as a chaperone protein that stabilizes mitochondrial respiratory enzymes and maintains mitochondrial integrity in the IMM, which is required for mitochondrial morphogenesis, neuronal survival, and normal lifespan. Its function is as follows. In the nucleus, serves as transcriptional co-regulator. The protein is Prohibitin-2 (phbB) of Dictyostelium discoideum (Social amoeba).